Here is a 397-residue protein sequence, read N- to C-terminus: Mannonate dehydratase (397 aa).

This sequence belongs to the mannonate dehydratase family. Fe(2+) serves as cofactor. It depends on Mn(2+) as a cofactor.

It carries out the reaction D-mannonate = 2-dehydro-3-deoxy-D-gluconate + H2O. Its pathway is carbohydrate metabolism; pentose and glucuronate interconversion. In terms of biological role, catalyzes the dehydration of D-mannonate. This Yersinia pseudotuberculosis serotype O:1b (strain IP 31758) protein is Mannonate dehydratase.